A 456-amino-acid chain; its full sequence is MFLLLPFDSLIVSLLGISLTVLFTLLLVFIIVPAVFGVSFGIRKLYMKTLLKIFAWATLRMERGAKEKNHQLYKPYTNGIIAKDPTSLEEEIKEIRRSGSSKALDNTPEFELSDIFYFCRKGMETIMDDEVTKRFSAEELESWNLLSRTNYNFQYISLRLTVLWGLGVLIRYCLLLSLRIALAFTGISLLVVGTTMVGYLPNGRFKEFLSKHVHLMCYRICVRALTAIITYHDRKNRPRNGGICVANHTSPIDVIILASDGYYAMVGQVHGGLMGVIQRAMVKACPHVWFERSEVKDRHLVARRLTEHVQDKSKLPILIFPEGTCINNTSVMMFKKGSFEIGATVYPVAIKYDPQFGDAFWNSSKYGMVTYLLRMMTSWAIVCSVWYLPPMTRQAEEDAVQFANRVKSAIARQGGLVDLLWDGGLKREKVKDTFKEEQQKLYSKMIVGNHEDRSRS.

The first 37 residues, 1–37 (MFLLLPFDSLIVSLLGISLTVLFTLLLVFIIVPAVFG), serve as a signal peptide directing secretion. Helical transmembrane passes span 156–176 (ISLR…CLLL) and 180–200 (IALA…VGYL). N-linked (GlcNAc...) asparagine glycosylation is present at Asn247. An HXXXXD motif motif is present at residues 248–253 (HTSPID). N-linked (GlcNAc...) asparagine glycosylation is found at Asn327, Asn328, and Asn362.

It belongs to the 1-acyl-sn-glycerol-3-phosphate acyltransferase family.

It localises to the endoplasmic reticulum membrane. The catalysed reaction is sn-glycerol 3-phosphate + an acyl-CoA = a 1-acyl-sn-glycero-3-phosphate + CoA. The enzyme catalyses dodecanoyl-CoA + sn-glycerol 3-phosphate = 1-dodecanoyl-sn-glycerol 3-phosphate + CoA. It carries out the reaction sn-glycerol 3-phosphate + hexadecanoyl-CoA = 1-hexadecanoyl-sn-glycero-3-phosphate + CoA. It catalyses the reaction sn-glycerol 3-phosphate + octadecanoyl-CoA = 1-octadecanoyl-sn-glycero-3-phosphate + CoA. The catalysed reaction is sn-glycerol 3-phosphate + (9Z)-octadecenoyl-CoA = 1-(9Z-octadecenoyl)-sn-glycero-3-phosphate + CoA. The enzyme catalyses (9Z,12Z)-octadecadienoyl-CoA + sn-glycerol 3-phosphate = 1-(9Z,12Z)-octadecadienoyl-sn-glycero-3-phosphate + CoA. It participates in phospholipid metabolism; CDP-diacylglycerol biosynthesis; CDP-diacylglycerol from sn-glycerol 3-phosphate: step 1/3. Converts glycerol-3-phosphate to 1-acyl-sn-glycerol-3-phosphate (lysophosphatidic acid or LPA) by incorporating an acyl moiety at the sn-1 position of the glycerol backbone. Active against both saturated and unsaturated long-chain fatty acyl-CoAs. Protects cells against lipotoxicity. This Bos taurus (Bovine) protein is Glycerol-3-phosphate acyltransferase 4.